A 123-amino-acid polypeptide reads, in one-letter code: Small ribosomal subunit protein uS13 (123 aa).

The interval 97–123 (PCRGQRTHTNSRTRKGPRRGVMAKKKK) is disordered.

Belongs to the universal ribosomal protein uS13 family. Part of the 30S ribosomal subunit. Forms a loose heterodimer with protein S19. Forms two bridges to the 50S subunit in the 70S ribosome.

Its function is as follows. Located at the top of the head of the 30S subunit, it contacts several helices of the 16S rRNA. In the 70S ribosome it contacts the 23S rRNA (bridge B1a) and protein L5 of the 50S subunit (bridge B1b), connecting the 2 subunits; these bridges are implicated in subunit movement. Contacts the tRNAs in the A and P-sites. The polypeptide is Small ribosomal subunit protein uS13 (Solidesulfovibrio magneticus (strain ATCC 700980 / DSM 13731 / RS-1) (Desulfovibrio magneticus)).